The following is a 293-amino-acid chain: Protease HtpX (293 aa).

Transmembrane regions (helical) follow at residues 4 to 24 and 34 to 54; these read IALF…VLSL and GLMI…LLMS. Residue H139 participates in Zn(2+) binding. E140 is a catalytic residue. Position 143 (H143) interacts with Zn(2+). Helical transmembrane passes span 158 to 178 and 193 to 213; these read VVNT…AGFL and MVYF…ASII. E222 is a Zn(2+) binding site.

It belongs to the peptidase M48B family. It depends on Zn(2+) as a cofactor.

The protein localises to the cell inner membrane. In Yersinia pseudotuberculosis serotype O:1b (strain IP 31758), this protein is Protease HtpX.